The primary structure comprises 345 residues: Pectin lyase (345 aa).

The signal sequence occupies residues 1 to 24 (MKRFCLWFAVFSLLLVLLPGKAFG). Residue R234 is part of the active site.

The protein belongs to the polysaccharide lyase 1 family.

The protein resides in the secreted. It catalyses the reaction Eliminative cleavage of (1-&gt;4)-alpha-D-galacturonan methyl ester to give oligosaccharides with 4-deoxy-6-O-methyl-alpha-D-galact-4-enuronosyl groups at their non-reducing ends.. Inhibited by Hg(2+) and Mn(2+). Not affected by EDTA in vitro. Catalyzes the depolymerization of pectins of methyl esterification degree from 13 to 75%, with an endo mode of action. Cannot degrade polygalacturonate. Also displays protopectinase activity, i.e. releases pectin from protopectin. This chain is Pectin lyase (pelB), found in Bacillus subtilis.